Reading from the N-terminus, the 194-residue chain is Ribosomal RNA small subunit methyltransferase G (194 aa).

Residues Gly70, Tyr75, 121-122 (VE), and Arg135 each bind S-adenosyl-L-methionine.

This sequence belongs to the methyltransferase superfamily. RNA methyltransferase RsmG family.

It localises to the cytoplasm. The catalysed reaction is guanosine(527) in 16S rRNA + S-adenosyl-L-methionine = N(7)-methylguanosine(527) in 16S rRNA + S-adenosyl-L-homocysteine. Specifically methylates the N7 position of guanine in position 527 of 16S rRNA. This Aliarcobacter butzleri (strain RM4018) (Arcobacter butzleri) protein is Ribosomal RNA small subunit methyltransferase G.